Reading from the N-terminus, the 589-residue chain is Aspartate--tRNA(Asp/Asn) ligase (589 aa).

Glu-172 is an L-aspartate binding site. The aspartate stretch occupies residues 196-199 (QLFK). Residue Arg-218 participates in L-aspartate binding. Residues 218–220 (RDE) and Gln-227 contribute to the ATP site. His-449 is a binding site for L-aspartate. Residue Glu-483 participates in ATP binding. Position 490 (Arg-490) interacts with L-aspartate. ATP is bound at residue 535–538 (GVDR).

Belongs to the class-II aminoacyl-tRNA synthetase family. Type 1 subfamily. Homodimer.

The protein resides in the cytoplasm. The enzyme catalyses tRNA(Asx) + L-aspartate + ATP = L-aspartyl-tRNA(Asx) + AMP + diphosphate. Aspartyl-tRNA synthetase with relaxed tRNA specificity since it is able to aspartylate not only its cognate tRNA(Asp) but also tRNA(Asn). Reaction proceeds in two steps: L-aspartate is first activated by ATP to form Asp-AMP and then transferred to the acceptor end of tRNA(Asp/Asn). The chain is Aspartate--tRNA(Asp/Asn) ligase from Francisella philomiragia subsp. philomiragia (strain ATCC 25017 / CCUG 19701 / FSC 153 / O#319-036).